The primary structure comprises 154 residues: Ribosomal RNA large subunit methyltransferase H (154 aa).

Leucine 71 and glycine 103 together coordinate S-adenosyl-L-methionine.

This sequence belongs to the RNA methyltransferase RlmH family. Homodimer.

Its subcellular location is the cytoplasm. The catalysed reaction is pseudouridine(1915) in 23S rRNA + S-adenosyl-L-methionine = N(3)-methylpseudouridine(1915) in 23S rRNA + S-adenosyl-L-homocysteine + H(+). Specifically methylates the pseudouridine at position 1915 (m3Psi1915) in 23S rRNA. The sequence is that of Ribosomal RNA large subunit methyltransferase H from Solidesulfovibrio magneticus (strain ATCC 700980 / DSM 13731 / RS-1) (Desulfovibrio magneticus).